The chain runs to 1245 residues: TAL effector protein Brg11 (1245 aa).

2 disordered regions span residues M1–E87 and C173–L205. Over residues P67–E87 the composition is skewed to pro residues. The short motif at R185–R191 is the Nuclear localization signal 1 element. Residues L286 to R320 form a Cryptic repeat -1 repeat. The Cryptic repeat 0 repeat unit spans residues L321–H354. Core repeat repeat units lie at residues L355–R389, L390–V424, L425–A459, L460–A494, L495–A529, L530–A564, L565–G599, L600–A634, L635–A669, L670–A704, L705–A739, L740–A774, L775–A809, L810–G844, L845–D879, and L880–A914. Residues L915–S948 form a Cryptic repeat +1 repeat. The Cryptic repeat +2 repeat unit spans residues L949–R982. Short sequence motifs (nuclear localization signal) lie at residues R980–R983, H1108–R1111, and R1145–R1148. Residues S1096–D1138 are disordered. Positions D1237 to T1245 are activation domain.

It belongs to the transcription activator-like effector (TALE) family. RipTAL/RTL subfamily.

The protein localises to the secreted. It is found in the host nucleus. In terms of biological role, exported into plant cells, where it is targeted to the nucleus and probably acts as a transcription factor. Binds DNA in a sequence-specific manner. May contribute to plant pathogenicity. The chain is TAL effector protein Brg11 from Ralstonia nicotianae (strain ATCC BAA-1114 / GMI1000) (Ralstonia solanacearum).